The chain runs to 561 residues: MAHYELHVLFVHSWMLALILITTLVWLAASQKAFTPDLVFPEMNRNSSWSVANYGEILCPTSFQSYDPKKHQILTRVLVERPSLNTDTKVEGYTCHKVKYETICDMPWYFSPTISHSISPLRVKESECKDAIAEHQLGTHVPLSFPPEDCSWNSVNTKEYEDIIVKEHPVMLDPYTNNYVDAIFPGGISSPGMGGTIHDDMMWVSKDLAVSPECSGWQRSMGLIYSSRLYGEREPMLEVGSIHIEGHRDKNLTLACRISFCGEIGVRFHDGEWMKVSVNLDHPNSVTFQVTDFPPCPPGTTIQTAVVENINPEIQELTVNMMYRLKCQETISKMVSGLPTSALDLSYLIQVQEGPGIVYKREKGILYQSVGMYQYIDTVTLNKEENQLGENSRGQKVFWTEWSDSPTRPGLQEGINGIVKYEGQVRVPLGMSLRLEAATELMWGHPVHTVSHPILHVISNHTEQSVTTWNRGVNSTNLIGLATRSISGFYDNLKLYLILALIFVSLIALVVLDVIPFKYILFVLCPPLLLCRFIKCSRRKPETRDRYHVEYNRPGQVSSAF.

Residues methionine 1 to serine 30 form the signal peptide. Over glutamine 31–leucine 495 the chain is Virion surface. Disulfide bonds link cysteine 59/cysteine 327, cysteine 95/cysteine 128, cysteine 104/cysteine 150, cysteine 214/cysteine 261, and cysteine 256/cysteine 296. The helical transmembrane segment at tyrosine 496–leucine 530 threads the bilayer. The Intravirion segment spans residues cysteine 531–phenylalanine 561.

Belongs to the vesiculovirus glycoprotein family. In terms of assembly, homotrimer. Post-translationally, glycosylated by host.

It localises to the virion membrane. Its subcellular location is the host membrane. Functionally, attaches the virus to host receptors, inducing clathrin-dependent endocytosis of the virion. Its function is as follows. In the endosome, the acidic pH induces conformational changes in the glycoprotein trimer, which trigger fusion between virus and endosomal membrane. The sequence is that of Glycoprotein (G) from Drosophila melanogaster sigma virus (isolate Drosophila/USA/AP30/2005) (DMelSV).